The sequence spans 394 residues: Na(+)/H(+) antiporter NhaA (394 aa).

Helical transmembrane passes span 14–34 (AGGL…NSAL), 59–79 (LLLW…GLEV), 95–115 (VFPA…YLLF), 125–145 (GWAI…ALLG), 154–174 (VFLL…IALF), 179–199 (VSLQ…YMNW), 213–233 (LVLW…GVIV), 254–274 (GLHP…NAGV), 292–312 (IATG…WLAV), 328–348 (IFAV…IASL), and 363–383 (LGIL…LRLV).

The protein belongs to the NhaA Na(+)/H(+) (TC 2.A.33) antiporter family.

The protein localises to the cell inner membrane. The enzyme catalyses Na(+)(in) + 2 H(+)(out) = Na(+)(out) + 2 H(+)(in). Its function is as follows. Na(+)/H(+) antiporter that extrudes sodium in exchange for external protons. In Yersinia pseudotuberculosis serotype IB (strain PB1/+), this protein is Na(+)/H(+) antiporter NhaA.